Here is a 1799-residue protein sequence, read N- to C-terminus: Bromodomain and WD repeat-containing protein 3 (1799 aa).

8 WD repeats span residues 170 to 209 (IKMH…IWAT), 213 to 251 (RLLA…VWCL), 255 to 297 (APVA…FWQW), 307 to 347 (RPVK…IYYL), 353 to 393 (EKIA…IWQY), 400 to 452 (SIVL…VWNS), 456 to 495 (QLLH…IWDL), and 502 to 542 (RNYF…LFGF). Position 693 is a phosphoserine (S693). Residues 766–912 (KKPSYPIQRN…KKKKGGLVSM (147 aa)) are disordered. Positions 784 to 794 (SLRRTQRKRQH) are enriched in basic residues. Polar residues predominate over residues 795 to 816 (TYLTRSNIEHNSQASSQTSGVQ). Over residues 817-828 (EDSDSSSEEDET) the composition is skewed to acidic residues. Positions 845–858 (SESSSSDSSSEYSD) are enriched in low complexity. Residues 875–884 (RQATQKIYSS) show a composition bias toward polar residues. 2 positions are modified to phosphoserine: S884 and S885. Residues 897–907 (KKPKQTKKKKG) are compositionally biased toward basic residues. The region spanning 1136 to 1243 (WGAHSRDEEC…DVLLRFIGDQ (108 aa)) is the Bromo 1 domain. 4 disordered regions span residues 1258 to 1291 (EDPD…KCRG), 1321 to 1366 (EPFR…IDTP), 1435 to 1482 (IQSQ…QNTS), and 1517 to 1723 (SPSS…AKRA). The span at 1260 to 1276 (PDSSDLEEDSEMVDLDS) shows a compositional bias: acidic residues. The Bromo 2 domain maps to 1298-1427 (CNPDAWKKQC…ALFENHIKNI (130 aa)). The span at 1333–1348 (PVQQQQEGESSQSVPP) shows a compositional bias: low complexity. Positions 1438–1450 (QKRRRPRYRKRLR) are enriched in basic residues. Composition is skewed to low complexity over residues 1451 to 1463 (SSSS…RAPS) and 1517 to 1530 (SPSS…SGNS). Phosphoserine occurs at positions 1574 and 1576. The span at 1584 to 1596 (GEEKEMKETKEQV) shows a compositional bias: basic and acidic residues. Residues 1598–1623 (LSSSESGELGSSLSSESTSGSDSDSE) are compositionally biased toward low complexity. Basic and acidic residues predominate over residues 1624–1640 (STSRTDQDYVDGDHDYS). Basic residues-rich tracts occupy residues 1646 to 1663 (RPKR…RNWK) and 1681 to 1694 (RGGR…RGGR). Phosphoserine is present on S1760.

Its function is as follows. Plays a role in the regulation of cell morphology and cytoskeletal organization. Required in the control of cell shape. The sequence is that of Bromodomain and WD repeat-containing protein 3 (Brwd3) from Mus musculus (Mouse).